Consider the following 351-residue polypeptide: Ribosomal RNA large subunit methyltransferase M (351 aa).

S-adenosyl-L-methionine-binding positions include Ser-186, 219 to 222 (APGG), Asp-238, Asp-258, and Asp-274. The Proton acceptor role is filled by Lys-303.

This sequence belongs to the class I-like SAM-binding methyltransferase superfamily. RNA methyltransferase RlmE family. RlmM subfamily. As to quaternary structure, monomer.

The protein resides in the cytoplasm. The catalysed reaction is cytidine(2498) in 23S rRNA + S-adenosyl-L-methionine = 2'-O-methylcytidine(2498) in 23S rRNA + S-adenosyl-L-homocysteine + H(+). Catalyzes the 2'-O-methylation at nucleotide C2498 in 23S rRNA. The polypeptide is Ribosomal RNA large subunit methyltransferase M (Xylella fastidiosa (strain 9a5c)).